The primary structure comprises 558 residues: Formate--tetrahydrofolate ligase (558 aa).

An ATP-binding site is contributed by 66–73 (TPAGEGKT).

The protein belongs to the formate--tetrahydrofolate ligase family.

It carries out the reaction (6S)-5,6,7,8-tetrahydrofolate + formate + ATP = (6R)-10-formyltetrahydrofolate + ADP + phosphate. The protein operates within one-carbon metabolism; tetrahydrofolate interconversion. The polypeptide is Formate--tetrahydrofolate ligase (Neisseria meningitidis serogroup A / serotype 4A (strain DSM 15465 / Z2491)).